Reading from the N-terminus, the 342-residue chain is Ketol-acid reductoisomerase (NADP(+)) (342 aa).

One can recognise a KARI N-terminal Rossmann domain in the interval 2–182; it reads AEMFYDDDAD…GGLRAGGIKT (181 aa). NADP(+)-binding positions include 25–28, lysine 48, serine 51, serine 53, and 83–86; these read FGSQ and DHLQ. Residue histidine 108 is part of the active site. Residue glycine 134 participates in NADP(+) binding. The region spanning 183–328 is the KARI C-terminal knotted domain; it reads TFTEETETDL…RELRKLMAWV (146 aa). Positions 191, 195, 227, and 231 each coordinate Mg(2+). Substrate is bound at residue serine 252.

Belongs to the ketol-acid reductoisomerase family. Requires Mg(2+) as cofactor.

It catalyses the reaction (2R)-2,3-dihydroxy-3-methylbutanoate + NADP(+) = (2S)-2-acetolactate + NADPH + H(+). The enzyme catalyses (2R,3R)-2,3-dihydroxy-3-methylpentanoate + NADP(+) = (S)-2-ethyl-2-hydroxy-3-oxobutanoate + NADPH + H(+). Its pathway is amino-acid biosynthesis; L-isoleucine biosynthesis; L-isoleucine from 2-oxobutanoate: step 2/4. The protein operates within amino-acid biosynthesis; L-valine biosynthesis; L-valine from pyruvate: step 2/4. In terms of biological role, involved in the biosynthesis of branched-chain amino acids (BCAA). Catalyzes an alkyl-migration followed by a ketol-acid reduction of (S)-2-acetolactate (S2AL) to yield (R)-2,3-dihydroxy-isovalerate. In the isomerase reaction, S2AL is rearranged via a Mg-dependent methyl migration to produce 3-hydroxy-3-methyl-2-ketobutyrate (HMKB). In the reductase reaction, this 2-ketoacid undergoes a metal-dependent reduction by NADPH to yield (R)-2,3-dihydroxy-isovalerate. The polypeptide is Ketol-acid reductoisomerase (NADP(+)) (Kineococcus radiotolerans (strain ATCC BAA-149 / DSM 14245 / SRS30216)).